Consider the following 443-residue polypeptide: Crinkler effector protein 161 (443 aa).

The first 17 residues, 1 to 17 (MVKLSCVIVGVPGDPFQ), serve as a signal peptide directing secretion. The LQLFLAK domain stretch occupies residues 18–56 (VEIDEICELVAGLKDAIKKEKPDSIKCDADKLQLFKAAK). Positions 57–126 (EDRTFSASGA…GMESPSISQI (70 aa)) are DWL domain. The HVLVXXP motif motif lies at 127-133 (HVLVVLP). The tract at residues 134–439 (EDSESEGGTS…RSMPGYCCAN (306 aa)) is effector domain. 2 short sequence motifs (nuclear localization signal) span residues 161–170 (ADKKRKRYWH) and 384–393 (HQPLKRLKLS).

Belongs to the Crinkler effector family.

Its subcellular location is the secreted. The protein resides in the host nucleus. Its function is as follows. Secreted effector that exhibits strong cell death suppression activity and suppresses cell death induced by a variety of effectors including CRN63, Avh241 and Avr3a. Protects host plants from biotic and abiotic stresses such as salinity and drought by up-regulation of many defense-related genes, including ABC transporters, Cytochrome P450 monooxygenases and receptor-like kinases (RLKs). Also enhances resistance to Phytophtora pathogens. This Phytophthora sojae (strain P6497) (Soybean stem and root rot agent) protein is Crinkler effector protein 161.